A 254-amino-acid chain; its full sequence is Ribonuclease PH (254 aa).

Phosphate-binding positions include R90 and 128-130; that span reads GTR.

Belongs to the RNase PH family. Homohexameric ring arranged as a trimer of dimers.

It catalyses the reaction tRNA(n+1) + phosphate = tRNA(n) + a ribonucleoside 5'-diphosphate. In terms of biological role, phosphorolytic 3'-5' exoribonuclease that plays an important role in tRNA 3'-end maturation. Removes nucleotide residues following the 3'-CCA terminus of tRNAs; can also add nucleotides to the ends of RNA molecules by using nucleoside diphosphates as substrates, but this may not be physiologically important. Probably plays a role in initiation of 16S rRNA degradation (leading to ribosome degradation) during starvation. This Corynebacterium kroppenstedtii (strain DSM 44385 / JCM 11950 / CIP 105744 / CCUG 35717) protein is Ribonuclease PH.